Consider the following 703-residue polypeptide: MFKSFSMELAGRTLTVETGKLAQLANGSALIRYGDTVIMSSATASAAPRDGIDFFPLSVDYEERLYAVGKIPGGFIKREGKPSEKAILTSRVIDRPIRPLFPKDLRNDVAVVNTVMSVEQDNSPEIAAMIGASVAISISDIPFNGPIGGVVLGLVDGEVIINPNEEQRAKSKMYVTLAGTKEKITMIEAGADIVPDDVMFDAIKKGHEEIKKICDFINGIVKEVGKAKFTYESADVPADLFEVVKEFAYDKMRIAVLATDKQDRDAKVSQLTEETQAALAEQFPEMESKINDALYKLEKKVVREYILKEGKRIDGRRLDEIRTLSAEVGILPRTHGSGLFERGQTQVLTTVTLGAMGDVQMLDGIDTEETKRYMHHYNFPGYSVGEAKTSRGPGRREIGHGALAERSLVPVIPTETEFPYAFRLVSEVLMSNGSTSQGSVCGSTLALMDAGVPIKAPVAGISAGLVIDEENPDNFVTFMDIQGIEDFFGDMDFKVAGTTEGITAIQMDIKVDGLSYEIIRQAFELTRMGRLQIINDVILKAIPQPRKELSEYAPKIITTNIDPEKIRDVIGPGGKMINKIIAETGVKIDIEEDGRVYILTPDSAAAQKALKIIQGIAKDIEPGEVYLGKVVRITTFGAFVEILPGKDGLVHISKLDKKRVEKVEDVVSIGDEILVKVTEIDKQGRINLSRKDAMAEENTTEEK.

Positions 486 and 492 each coordinate Mg(2+). The region spanning proline 554–isoleucine 613 is the KH domain. An S1 motif domain is found at glycine 623–lysine 691.

This sequence belongs to the polyribonucleotide nucleotidyltransferase family. Mg(2+) serves as cofactor.

The protein resides in the cytoplasm. The enzyme catalyses RNA(n+1) + phosphate = RNA(n) + a ribonucleoside 5'-diphosphate. Its function is as follows. Involved in mRNA degradation. Catalyzes the phosphorolysis of single-stranded polyribonucleotides processively in the 3'- to 5'-direction. The sequence is that of Polyribonucleotide nucleotidyltransferase from Ruminiclostridium cellulolyticum (strain ATCC 35319 / DSM 5812 / JCM 6584 / H10) (Clostridium cellulolyticum).